The sequence spans 394 residues: Mitogen-activated protein kinase homolog D5 (394 aa).

The 286-residue stretch at 62-347 (RPPIMPIGKG…VENALAHPYL (286 aa)) folds into the Protein kinase domain. ATP-binding positions include 68–76 (IGKGAYGIV) and lysine 91. The active-site Proton acceptor is the aspartate 188. Threonine 220 carries the phosphothreonine modification. Residues 220-222 (TEY) carry the TXY motif. A Phosphotyrosine modification is found at tyrosine 222.

It belongs to the protein kinase superfamily. CMGC Ser/Thr protein kinase family. MAP kinase subfamily. Mg(2+) is required as a cofactor. Dually phosphorylated on Thr-220 and Tyr-222, which activates the enzyme. As to expression, leaves, roots, root apices, and dormant and growing axillary buds.

It carries out the reaction L-seryl-[protein] + ATP = O-phospho-L-seryl-[protein] + ADP + H(+). The enzyme catalyses L-threonyl-[protein] + ATP = O-phospho-L-threonyl-[protein] + ADP + H(+). Activated by tyrosine and threonine phosphorylation. The polypeptide is Mitogen-activated protein kinase homolog D5 (Pisum sativum (Garden pea)).